The primary structure comprises 238 residues: Sugar fermentation stimulation protein homolog (238 aa).

It belongs to the SfsA family.

This Histophilus somni (strain 129Pt) (Haemophilus somnus) protein is Sugar fermentation stimulation protein homolog.